A 472-amino-acid chain; its full sequence is Clampless protein 1 (472 aa).

Residues N70 and N296 are each glycosylated (N-linked (GlcNAc...) asparagine).

In terms of biological role, required for developmental progression after cells of opposite mating types fuse with one another, essential for processes common to both dikaryotic filament formation and monokaryotic fruiting. A direct target for transcription factors Sxi1-alpha and Sxi2-a. The sequence is that of Clampless protein 1 from Cryptococcus neoformans var. neoformans serotype D (strain B-3501A) (Filobasidiella neoformans).